Here is a 1358-residue protein sequence, read N- to C-terminus: Phosphoinositide 3-kinase regulatory subunit 4 (1358 aa).

Residue Gly-2 is the site of N-myristoyl glycine attachment. A Protein kinase domain is found at 26-324; sequence FEYDKSLGST…AFPEIFYTFL (299 aa). ATP-binding positions include 32–40 and Lys-53; that span reads LGSTRFFKV. Asp-148 functions as the Proton acceptor in the catalytic mechanism. HEAT repeat units follow at residues 413-450, 458-495, 572-610, and 612-648; these read ILLD…LVQE, IYPE…TALR, KAND…YVGW, and SSSI…LGLL. Residues Ser-808, Ser-813, Ser-853, and Ser-865 each carry the phosphoserine modification. 6 WD repeats span residues 991–1030, 1040–1079, 1093–1134, 1139–1178, 1182–1223, and 1237–1278; these read EHKS…GKTT, RIGG…LPKS, KEDG…NAWT, LKSG…PISS, PSRA…RRLT, and PSPH…RSYV. The disordered stretch occupies residues 1307–1326; that stretch reads KQKVGPSDDTPRRGPESLPV. The span at 1315-1326 shows a compositional bias: basic and acidic residues; the sequence is DTPRRGPESLPV. At Thr-1316 the chain carries Phosphothreonine. The WD 7 repeat unit spans residues 1327-1358; that stretch reads GHHDIITDIATFQTTQGFIVTASRDGIVKVWK.

The protein belongs to the protein kinase superfamily. Ser/Thr protein kinase family. As to quaternary structure, component of the PI3K (PI3KC3/PI3K-III/class III phosphatidylinositol 3-kinase) complex the core of which is composed of the catalytic subunit PIK3C3, the regulatory subunit PIK3R4 and BECN1 associating with additional regulatory/auxiliary subunits to form alternative complex forms. Alternative complex forms containing a fourth regulatory subunit in a mutually exclusive manner are PI3K complex I (PI3KC3-C1) containing ATG14, and PI3K complex II (PI3KC3-C2) containing UVRAG. PI3KC3-C1 displays a V-shaped architecture with PIK3R4 serving as a bridge between PIK3C3 and the ATG14:BECN1 subcomplex. Both, PI3KC3-C1 and PI3KC3-C2, can associate with further regulatory subunits, such as RUBCN, SH3GLB1/Bif-1, AMBRA1 and NRBF2. PI3KC3-C1 probably associates with PIK3CB. Interacts with RAB7A in the presence of PIK3C3/VPS34. Interacts with NRBF2. Interacts with ARMC3. Requires Mn(2+) as cofactor. Myristoylated. Post-translationally, probably autophosphorylated.

The protein localises to the late endosome. It is found in the cytoplasmic vesicle. Its subcellular location is the autophagosome. It localises to the membrane. The enzyme catalyses L-seryl-[protein] + ATP = O-phospho-L-seryl-[protein] + ADP + H(+). It carries out the reaction L-threonyl-[protein] + ATP = O-phospho-L-threonyl-[protein] + ADP + H(+). In terms of biological role, regulatory subunit of the PI3K complex that mediates formation of phosphatidylinositol 3-phosphate; different complex forms are believed to play a role in multiple membrane trafficking pathways: PI3KC3-C1 is involved in initiation of autophagosomes and PI3KC3-C2 in maturation of autophagosomes and endocytosis. Involved in regulation of degradative endocytic trafficking and cytokinesis, probably in the context of PI3KC3-C2. This is Phosphoinositide 3-kinase regulatory subunit 4 (Pik3r4) from Mus musculus (Mouse).